Reading from the N-terminus, the 139-residue chain is Transcription initiation factor IIA small chain homolog (139 aa).

A disordered region spans residues 113 to 139 (LSAQGPSKRVNRAHAAAAGDDEDDDSD).

The protein belongs to the TFIIA subunit 2 family.

It localises to the nucleus. The sequence is that of Transcription initiation factor IIA small chain homolog from Caenorhabditis elegans.